The sequence spans 491 residues: NADPH:adrenodoxin oxidoreductase, mitochondrial (491 aa).

The N-terminal 32 residues, 1–32, are a transit peptide targeting the mitochondrion; that stretch reads MASRCWRWWGWSAWPRTRLPPAGSTPSFCHHF. FAD-binding residues include A49, E69, L77, and V113. NADP(+)-binding positions include 184 to 187, 228 to 229, and E240; these read QGNV and RR. S310 and S317 each carry phosphoserine. Residues W398 and 405–407 each bind FAD; that span reads GVI. Residue G405 coordinates NADP(+).

The protein belongs to the ferredoxin--NADP reductase type 1 family. Monomer. Interacts directly with FDX1. Requires FAD as cofactor.

The protein resides in the mitochondrion. The protein localises to the mitochondrion inner membrane. It catalyses the reaction 2 reduced [adrenodoxin] + NADP(+) + H(+) = 2 oxidized [adrenodoxin] + NADPH. The catalysed reaction is 2 reduced [2Fe-2S]-[ferredoxin] + NADP(+) + H(+) = 2 oxidized [2Fe-2S]-[ferredoxin] + NADPH. Its pathway is steroid metabolism; cholesterol metabolism. In terms of biological role, serves as the first electron transfer protein in all the mitochondrial P450 systems including cholesterol side chain cleavage in all steroidogenic tissues, steroid 11-beta hydroxylation in the adrenal cortex, 25-OH-vitamin D3-24 hydroxylation in the kidney, and sterol C-27 hydroxylation in the liver. Also acts as a ferredoxin--NADP(+) reductase essential for coenzyme Q biosynthesis: together with FDX2, transfers the electrons required for the hydroxylation reaction performed by COQ6. The polypeptide is NADPH:adrenodoxin oxidoreductase, mitochondrial (Homo sapiens (Human)).